The chain runs to 417 residues: Peptide chain release factor subunit 1 (417 aa).

This sequence belongs to the eukaryotic release factor 1 family. In terms of assembly, heterodimer of two subunits, one of which binds GTP.

It localises to the cytoplasm. Directs the termination of nascent peptide synthesis (translation) in response to the termination codons UAA, UAG and UGA. This chain is Peptide chain release factor subunit 1 (prf1), found in Thermoplasma acidophilum (strain ATCC 25905 / DSM 1728 / JCM 9062 / NBRC 15155 / AMRC-C165).